An 84-amino-acid chain; its full sequence is ATP synthase subunit c (84 aa).

A run of 2 helical transmembrane segments spans residues 8–28 (VAGMCAIGAGLASIACIGGGI) and 56–76 (IIGSALSEATAIYGFLIAILL).

This sequence belongs to the ATPase C chain family. F-type ATPases have 2 components, F(1) - the catalytic core - and F(0) - the membrane proton channel. F(1) has five subunits: alpha(3), beta(3), gamma(1), delta(1), epsilon(1). F(0) has three main subunits: a(1), b(2) and c(10-14). The alpha and beta chains form an alternating ring which encloses part of the gamma chain. F(1) is attached to F(0) by a central stalk formed by the gamma and epsilon chains, while a peripheral stalk is formed by the delta and b chains.

It is found in the cell membrane. In terms of biological role, f(1)F(0) ATP synthase produces ATP from ADP in the presence of a proton or sodium gradient. F-type ATPases consist of two structural domains, F(1) containing the extramembraneous catalytic core and F(0) containing the membrane proton channel, linked together by a central stalk and a peripheral stalk. During catalysis, ATP synthesis in the catalytic domain of F(1) is coupled via a rotary mechanism of the central stalk subunits to proton translocation. Key component of the F(0) channel; it plays a direct role in translocation across the membrane. A homomeric c-ring of between 10-14 subunits forms the central stalk rotor element with the F(1) delta and epsilon subunits. This Clostridium novyi (strain NT) protein is ATP synthase subunit c.